We begin with the raw amino-acid sequence, 290 residues long: ATP synthase gamma chain (290 aa).

Belongs to the ATPase gamma chain family. As to quaternary structure, F-type ATPases have 2 components, CF(1) - the catalytic core - and CF(0) - the membrane proton channel. CF(1) has five subunits: alpha(3), beta(3), gamma(1), delta(1), epsilon(1). CF(0) has three main subunits: a, b and c.

Its subcellular location is the cell membrane. Functionally, produces ATP from ADP in the presence of a proton gradient across the membrane. The gamma chain is believed to be important in regulating ATPase activity and the flow of protons through the CF(0) complex. The chain is ATP synthase gamma chain from Wolbachia sp. subsp. Brugia malayi (strain TRS).